Here is a 188-residue protein sequence, read N- to C-terminus: GMP synthase [glutamine-hydrolyzing] subunit A (188 aa).

Positions 1 to 188 constitute a Glutamine amidotransferase type-1 domain; that stretch reads MIVIMDNGGQ…RNFAKLCGEL (188 aa). Cys-78 serves as the catalytic Nucleophile. Active-site residues include His-165 and Glu-167.

In terms of assembly, heterodimer composed of a glutamine amidotransferase subunit (A) and a GMP-binding subunit (B).

It catalyses the reaction XMP + L-glutamine + ATP + H2O = GMP + L-glutamate + AMP + diphosphate + 2 H(+). It participates in purine metabolism; GMP biosynthesis; GMP from XMP (L-Gln route): step 1/1. Catalyzes the synthesis of GMP from XMP. The polypeptide is GMP synthase [glutamine-hydrolyzing] subunit A (Pyrococcus abyssi (strain GE5 / Orsay)).